Consider the following 330-residue polypeptide: Aspartate--ammonia ligase (330 aa).

The protein belongs to the class-II aminoacyl-tRNA synthetase family. AsnA subfamily.

It localises to the cytoplasm. The enzyme catalyses L-aspartate + NH4(+) + ATP = L-asparagine + AMP + diphosphate + H(+). It participates in amino-acid biosynthesis; L-asparagine biosynthesis; L-asparagine from L-aspartate (ammonia route): step 1/1. This is Aspartate--ammonia ligase from Streptococcus pneumoniae serotype 2 (strain D39 / NCTC 7466).